Consider the following 245-residue polypeptide: Orotidine 5'-phosphate decarboxylase (245 aa).

Residues D22, K44, 71 to 80, T131, R192, Q201, G221, and R222 contribute to the substrate site; that span reads DLKFHDIPNT. K73 acts as the Proton donor in catalysis.

The protein belongs to the OMP decarboxylase family. Type 1 subfamily. Homodimer.

The catalysed reaction is orotidine 5'-phosphate + H(+) = UMP + CO2. The protein operates within pyrimidine metabolism; UMP biosynthesis via de novo pathway; UMP from orotate: step 2/2. In terms of biological role, catalyzes the decarboxylation of orotidine 5'-monophosphate (OMP) to uridine 5'-monophosphate (UMP). This is Orotidine 5'-phosphate decarboxylase from Shigella boydii serotype 18 (strain CDC 3083-94 / BS512).